Here is a 331-residue protein sequence, read N- to C-terminus: GTP 3',8-cyclase 2 (331 aa).

The Radical SAM core domain maps to 9 to 234 (PFGRRITYLR…PSLARSGGPS (226 aa)). Residue Arg-18 participates in GTP binding. Residues Cys-25 and Cys-29 each contribute to the [4Fe-4S] cluster site. Tyr-31 provides a ligand contact to S-adenosyl-L-methionine. Cys-32 provides a ligand contact to [4Fe-4S] cluster. A GTP-binding site is contributed by Arg-67. Gly-71 is a binding site for S-adenosyl-L-methionine. A GTP-binding site is contributed by Thr-98. Residue Ser-122 participates in S-adenosyl-L-methionine binding. Lys-159 serves as a coordination point for GTP. Met-193 contributes to the S-adenosyl-L-methionine binding site. 2 residues coordinate [4Fe-4S] cluster: Cys-257 and Cys-260. 262–264 (RVR) is a GTP binding site. Residue Cys-274 participates in [4Fe-4S] cluster binding.

The protein belongs to the radical SAM superfamily. MoaA family. In terms of assembly, monomer and homodimer. Requires [4Fe-4S] cluster as cofactor.

The catalysed reaction is GTP + AH2 + S-adenosyl-L-methionine = (8S)-3',8-cyclo-7,8-dihydroguanosine 5'-triphosphate + 5'-deoxyadenosine + L-methionine + A + H(+). The protein operates within cofactor biosynthesis; molybdopterin biosynthesis. Catalyzes the cyclization of GTP to (8S)-3',8-cyclo-7,8-dihydroguanosine 5'-triphosphate. This is GTP 3',8-cyclase 2 (moaA2) from Pseudomonas aeruginosa (strain ATCC 15692 / DSM 22644 / CIP 104116 / JCM 14847 / LMG 12228 / 1C / PRS 101 / PAO1).